We begin with the raw amino-acid sequence, 189 residues long: Riboflavin transporter RibU (189 aa).

Residues M1–M9 are Cytoplasmic-facing. Residues Q10–T29 form a helical membrane-spanning segment. The Periplasmic portion of the chain corresponds to F30–L44. The helical intramembrane region spans D45 to F56. Residues T57–F58 lie on the Cytoplasmic side of the membrane. Residues G59–S78 form a helical membrane-spanning segment. Topologically, residues M79 to P82 are periplasmic. Residues V83 to K104 form a helical membrane-spanning segment. Residues N105 to R107 are Cytoplasmic-facing. A helical transmembrane segment spans residues S108–Y132. Over F133–G159 the chain is Periplasmic. A helical transmembrane segment spans residues I160 to L182. The Cytoplasmic portion of the chain corresponds to A183–I189.

The protein belongs to the prokaryotic riboflavin transporter (P-RFT) (TC 2.A.87) family. In terms of assembly, forms a stable energy-coupling factor (ECF) transporter complex composed of a membrane-embedded substrate-binding protein (S component), 2 ATP-binding proteins (A component) and 2 transmembrane proteins (T component). May be able to interact with more than 1 S component at a time.

It is found in the cell membrane. Functionally, mediates riboflavin uptake, may also transport FMN and roseoflavin. Probably a riboflavin-binding protein that interacts with the energy-coupling factor (ECF) ABC-transporter complex. Unlike classic ABC transporters this ECF transporter provides the energy necessary to transport a number of different substrates. The substrates themselves are bound by transmembrane, not extracytoplasmic soluble proteins. This Staphylococcus aureus (strain TCH60) protein is Riboflavin transporter RibU (ribU).